The following is a 440-amino-acid chain: Cytochrome b (440 aa).

Residues 46–66 (IWGIVLAFCLVLQIATGIVLV) form a helical membrane-spanning segment. Residues His97 and His111 each contribute to the heme b site. The next 9 helical transmembrane spans lie at 100–120 (GASL…YYGS), 129–149 (WIVG…GYVL), 156–176 (FWGA…GEAI), 194–214 (FFSL…VHIW), 253–273 (LFAL…MPNY), 296–315 (WYFL…VWVV), 330–350 (FFGV…PWLD), 365–385 (WWFW…AMPA), and 394–414 (LAGS…LGII). Heme b is bound by residues His198 and His212.

Belongs to the cytochrome b family. The main subunits of complex b-c1 are: cytochrome b, cytochrome c1 and the Rieske protein. The cofactor is heme b.

Its subcellular location is the cell membrane. Component of the ubiquinol-cytochrome c reductase complex (complex III or cytochrome b-c1 complex), which is a respiratory chain that generates an electrochemical potential coupled to ATP synthesis. The protein is Cytochrome b (petB) of Paracoccus denitrificans.